Here is a 195-residue protein sequence, read N- to C-terminus: Phosphoheptose isomerase (195 aa).

Residues 35–195 (LCVALYRGDK…EKEIFGDGVN (161 aa)) enclose the SIS domain. Position 51–53 (51–53 (NGG)) interacts with substrate. Zn(2+) is bound by residues His60 and Glu64. Residues Glu64, 93–94 (ND), 119–121 (STS), Ser124, and Gln171 each bind substrate. Residues Gln171 and His179 each contribute to the Zn(2+) site.

It belongs to the SIS family. GmhA subfamily. As to quaternary structure, homotetramer. Zn(2+) is required as a cofactor.

It is found in the cytoplasm. It catalyses the reaction 2 D-sedoheptulose 7-phosphate = D-glycero-alpha-D-manno-heptose 7-phosphate + D-glycero-beta-D-manno-heptose 7-phosphate. It functions in the pathway carbohydrate biosynthesis; D-glycero-D-manno-heptose 7-phosphate biosynthesis; D-glycero-alpha-D-manno-heptose 7-phosphate and D-glycero-beta-D-manno-heptose 7-phosphate from sedoheptulose 7-phosphate: step 1/1. Its function is as follows. Catalyzes the isomerization of sedoheptulose 7-phosphate in D-glycero-D-manno-heptose 7-phosphate. This is Phosphoheptose isomerase from Sulfurimonas denitrificans (strain ATCC 33889 / DSM 1251) (Thiomicrospira denitrificans (strain ATCC 33889 / DSM 1251)).